The sequence spans 473 residues: Photosystem II CP43 reaction center protein (473 aa).

Residues 1–14 (MKTLYSLRRFYHVE) constitute a propeptide that is removed on maturation. The residue at position 15 (Thr15) is an N-acetylthreonine. Thr15 is modified (phosphothreonine). The next 5 membrane-spanning stretches (helical) occupy residues 69-93 (LFEVAHFVPEKPMYEQGLILLPHLA), 134-155 (LLGPETLEESFPFFGYVWKDRN), 178-200 (KALYFGGVYDTWAPGGGDVRKIT), 255-275 (KPFAWARRALVWSGEAYLSYS), and 291-312 (WFNNTAYPSEFYGPTGPEASQA). Glu367 lines the [CaMn4O5] cluster pocket. A helical membrane pass occupies residues 447–471 (RARAAAAGFEKGIDRDFEPVLSMTP).

It belongs to the PsbB/PsbC family. PsbC subfamily. As to quaternary structure, PSII is composed of 1 copy each of membrane proteins PsbA, PsbB, PsbC, PsbD, PsbE, PsbF, PsbH, PsbI, PsbJ, PsbK, PsbL, PsbM, PsbT, PsbX, PsbY, PsbZ, Psb30/Ycf12, at least 3 peripheral proteins of the oxygen-evolving complex and a large number of cofactors. It forms dimeric complexes. Requires Binds multiple chlorophylls and provides some of the ligands for the Ca-4Mn-5O cluster of the oxygen-evolving complex. It may also provide a ligand for a Cl- that is required for oxygen evolution. PSII binds additional chlorophylls, carotenoids and specific lipids. as cofactor.

Its subcellular location is the plastid. The protein localises to the chloroplast thylakoid membrane. Functionally, one of the components of the core complex of photosystem II (PSII). It binds chlorophyll and helps catalyze the primary light-induced photochemical processes of PSII. PSII is a light-driven water:plastoquinone oxidoreductase, using light energy to abstract electrons from H(2)O, generating O(2) and a proton gradient subsequently used for ATP formation. The protein is Photosystem II CP43 reaction center protein of Aethionema cordifolium (Lebanon stonecress).